A 129-amino-acid chain; its full sequence is MGGGGNGRGSGEERREKRSGASEGEDGMVSPERPAFMEHSRPVGYHPQEDESQLPNHLETRVTVYRSHASQLKTADSPTLFLLWLSPVSSSPSRSPSSSEEYHPLSCGSRSASTNETRRRLSTADWLWW.

2 disordered regions span residues 1–57 and 87–129; these read MGGG…LPNH and PVSS…WLWW. Positions 10 to 20 are enriched in basic and acidic residues; sequence SGEERREKRSG. The segment covering 87–99 has biased composition (low complexity); that stretch reads PVSSSPSRSPSSS.

This is an uncharacterized protein from Homo sapiens (Human).